The chain runs to 107 residues: Immunoglobulin kappa constant (107 aa).

The Ig-like domain occupies 6-103 (PTVSIFPPSS…STSPIVKSFN (98 aa)). A disulfide bridge links C27 with C87.

In Mus musculus (Mouse), this protein is Immunoglobulin kappa constant.